The sequence spans 97 residues: Coiled-coil domain-containing protein 167 (97 aa).

Positions 10–79 (GVALEIDGLE…LRQENRKNML (70 aa)) form a coiled coil. A helical transmembrane segment spans residues 78-95 (MLLSVAIFILLTLVYAYW).

It is found in the membrane. The polypeptide is Coiled-coil domain-containing protein 167 (CCDC167) (Homo sapiens (Human)).